A 1374-amino-acid polypeptide reads, in one-letter code: MVSLRDNIESQPLSHNRRVRKNFGHINLVADIPNLIEIQKNSYERNFLQLNIKDSERKNKGLQSILNSIFPISDSSNIANLEFVKYEFDTPKYDVDECSQRSLSYAAPLKVTLRLSIWDIDEDTGTREIKGIKEQEVYMGDIPLMTKNGTFIINGTERVVVSQMHRSPGVFFYHDEGKVHSSGKLLYSARVIPYRGSWLDFEFDAKDVIYFRIDRKRKLYATTLLRAIGMNTEEIMKFYYNSVTYKCIKNKGWSVKFIPQHITAHRLTSDLVDADTGNVLLKAGQKITPRLAQKYFSIGLNNILVTHETLIGKYLSEDLRDPESDEILAKIGEMITADMLQVINDLKIKNVNVLVINPQSGPYIRNTLFADKNQDRETALCDIFRVLRPGEPANIEAAESLFYNLFFDAERYDLSEVGRIKMNSRLELNISEEITVLTIDDIKNIVRILVELKDGKGIIDDIDHLGNRRVRSVGELIENQFRIGLVRIEKSVIERMSAGDVDTVMPHDLVNSKILVSVVKEFFSTSQLSQFMDQTNPLSEITHKRRLSALGPGGLSRDRAGFEVRDVHPTHYGRICPIETPEGQNIGLINSMATYARINKHGFIESPYRRVKDGYVTDEVVYLSAIEEGKYKIGQANSKVDQDGKLQGEFINCRVEGGNFVMVEPYEVDFIDVTPMQVVSVAASLIPFLENDDANRALMGSNMQRQAVPLIKTEAPFVGTGVEGVVAKDSGASVLALHDGIVERVDSNRIVIRTLEQKVDGSPSVDIYNLLKFQKSNHNTCINQKPLVKVGHYVKKNDIIADGPSTDNGEIALGRNVLVAFLPWNGYNFEDSILISERIVKEDVFTSIHIEEFEVIARDTRLGPEEITRDIPNVSEEALRHLDEVGIIYVGAEVKAGDILVGKVTPKSESPITPEEKLLRAIFGEKAFDVKDSSLHVPSGVSGTVVEVRIFSRRGVEKDQRAIAIEKQQIEKLAKDRDDELEIIEHFVFSWLEKLLVGHVIISGPKQITAGQTITTEMLKGLSKGQLWQLIVEDANVMNEIEQIKIHYDEKKHALDKRFATKVEKLQSGDDLPQGALKVVKVFIATKHKLQPGDKMAGRHGNKGVISRIVPEEDMPFLEDGTVVDIVLNPLGLPSRMNIGQILETHLGWASINLAKKISTLVKEYKDNNIDIEQIKKFLLELYGKDINYILEGSEEGIISFCNKVSKGVYFATPVFDGAKVQDVKDMLKLADQDLSGQVKLIDGRTGEYFDRLVTVGHKYLLKLHHLVDNKIHSRSIGPYSLVTQQPLGGKSHFGGQRFGEMECWALQAYGAAYTLQEMLTVKSDDVNGRIKTYDSIVRGENNFESGIPESFNVMIKEFRSLCLNVKLEVTASK.

It belongs to the RNA polymerase beta chain family. In terms of assembly, the RNAP catalytic core consists of 2 alpha, 1 beta, 1 beta' and 1 omega subunit. When a sigma factor is associated with the core the holoenzyme is formed, which can initiate transcription.

The catalysed reaction is RNA(n) + a ribonucleoside 5'-triphosphate = RNA(n+1) + diphosphate. DNA-dependent RNA polymerase catalyzes the transcription of DNA into RNA using the four ribonucleoside triphosphates as substrates. The sequence is that of DNA-directed RNA polymerase subunit beta from Rickettsia typhi (strain ATCC VR-144 / Wilmington).